A 457-amino-acid chain; its full sequence is MQKYTSEARQLLALAIPVILAQVAQTAMGFVDTVMAGGYSATDMAAVAIGTSIWLPAILFGHGLLLALTPVIAQLNGSGRRERIAHQVRQGFWLAGFVSVLVMIVLWNAGYIIRSMHNIDPALADKAVGYLRALLWGAPGYLFFQVARNQCEGLAKTKPGMVMGFLGLLVNIPVNYIFIYGHFGMPELGGIGCGVATAAVYWVMFIAMLSYIKHARSMRDIRNEKGFGKPDSIVMKRLIQLGLPIALALFFEVTLFAVVALLVSPLGIVDVAGHQIALNFSSLMFVLPMSLAAAVTIRVGYRLGQGSTLDAQTAARTGLGVGICMAVVTAIFTVTLRKHIALLYNDNPEVVALAAQLMLLAAVYQISDSIQVIGSGILRGYKDTRSIFFITFTAYWVLGLPSGYILALTDLVVDRMGPAGFWMGFIIGLTSAAVLMMLRMRYLQRQPSAIILQRAAR.

12 helical membrane passes run 11-31 (LLAL…MGFV), 53-73 (IWLP…PVIA), 93-113 (WLAG…GYII), 127-147 (AVGY…FQVA), 160-180 (GMVM…IFIY), 188-208 (LGGI…FIAM), 243-263 (LPIA…ALLV), 276-296 (IALN…AAVT), 314-334 (AART…IFTV), 350-370 (VVAL…SDSI), 387-407 (IFFI…YILA), and 418-438 (PAGF…LMML).

The protein belongs to the multi antimicrobial extrusion (MATE) (TC 2.A.66.1) family. MdtK subfamily.

Its subcellular location is the cell inner membrane. In terms of biological role, multidrug efflux pump that functions probably as a Na(+)/drug antiporter. The polypeptide is Multidrug resistance protein MdtK (Salmonella enteritidis PT4 (strain P125109)).